The chain runs to 78 residues: Large ribosomal subunit protein bL28 (78 aa).

The segment at 1–29 is disordered; that stretch reads MSAHCQVTGRKPSFGKSVSHSHRRTSRRW.

The protein belongs to the bacterial ribosomal protein bL28 family.

This chain is Large ribosomal subunit protein bL28, found in Corynebacterium glutamicum (strain ATCC 13032 / DSM 20300 / JCM 1318 / BCRC 11384 / CCUG 27702 / LMG 3730 / NBRC 12168 / NCIMB 10025 / NRRL B-2784 / 534).